The following is a 357-amino-acid chain: GTPase Obg (357 aa).

The region spanning Met1–Ile158 is the Obg domain. One can recognise an OBG-type G domain in the interval Ala159–Glu345. Residues Gly165–Ser172, Phe190–Thr194, Asp212–Gly215, Thr280–Asp283, and Ser326–Val328 contribute to the GTP site. 2 residues coordinate Mg(2+): Ser172 and Thr192.

The protein belongs to the TRAFAC class OBG-HflX-like GTPase superfamily. OBG GTPase family. Monomer. Requires Mg(2+) as cofactor.

The protein resides in the cytoplasm. Its function is as follows. An essential GTPase which binds GTP, GDP and possibly (p)ppGpp with moderate affinity, with high nucleotide exchange rates and a fairly low GTP hydrolysis rate. Plays a role in control of the cell cycle, stress response, ribosome biogenesis and in those bacteria that undergo differentiation, in morphogenesis control. The polypeptide is GTPase Obg (Nautilia profundicola (strain ATCC BAA-1463 / DSM 18972 / AmH)).